The following is a 3430-amino-acid chain: Genome polyprotein (3430 aa).

Positions 2 to 15 (SKKPGGPGKNRAVN) are interaction with host EXOC1. The Cytoplasmic portion of the chain corresponds to 2–105 (SKKPGGPGKN…NRRSTKQKKR (104 aa)). Residues 37 to 72 (LIDGKGPIRFVLALLAFFRFTAIAPTRAVLDRWRGV) form a hydrophobic; homodimerization of capsid protein C region. A propeptide spans 106 to 123 (GGTAGFTILLGLIACAGA) (ER anchor for the capsid protein C, removed in mature form by serine protease NS3). Residues 106–126 (GGTAGFTILLGLIACAGAVTL) traverse the membrane as a helical segment. The Extracellular segment spans residues 127 to 248 (SNFQGKVMMT…KATRYLVKTE (122 aa)). Asn-138 carries an N-linked (GlcNAc...) asparagine; by host glycan. The helical transmembrane segment at 249–269 (SWILRNPGYALVAAVIGWMLG) threads the bilayer. The Cytoplasmic portion of the chain corresponds to 270-275 (SNTMQR). The chain crosses the membrane as a helical span at residues 276–290 (VVFAILLLLVAPAYS). Residues 291 to 739 (FNCLGMSNRD…QVFGGAFRSL (449 aa)) lie on the Extracellular side of the membrane. Disulfide bonds link Cys-293-Cys-320, Cys-350-Cys-406, Cys-364-Cys-395, Cys-382-Cys-411, Cys-476-Cys-574, and Cys-591-Cys-622. The interval 388–401 (DRGWGNGCGLFGKG) is fusion peptide. The helical transmembrane segment at 740–760 (FGGMSWITQGLLGALLLWMGI) threads the bilayer. Residues 761–766 (NARDRS) are Cytoplasmic-facing. The helical transmembrane segment at 767 to 787 (IAMTFLAVGGVLLFLSVNVHA) threads the bilayer. Topologically, residues 788-1212 (DTGCAIDIGR…AFAEANSGGD (425 aa)) are extracellular. Disulfide bonds link Cys-791/Cys-802 and Cys-842/Cys-930. Residues Asn-917, Asn-962, and Asn-994 are each glycosylated (N-linked (GlcNAc...) asparagine; by host). Intrachain disulfides connect Cys-966-Cys-1010, Cys-1067-Cys-1116, Cys-1078-Cys-1099, and Cys-1100-Cys-1103. The helical transmembrane segment at 1213-1233 (VVHLALMATFKIQPVFLVASF) threads the bilayer. Residues 1234–1243 (LKARWTNQES) lie on the Cytoplasmic side of the membrane. The chain crosses the membrane as a helical span at residues 1244-1264 (ILLMLAAAFFQMAYYDAKNVL). Over 1265–1278 (SWEVPDVLNSLSVA) the chain is Lumenal. A helical transmembrane segment spans residues 1279–1299 (WMILRAISFTNTSNVVVPLLA). Over 1300–1307 (LLTPGLKC) the chain is Cytoplasmic. A helical transmembrane segment spans residues 1308-1328 (LNLDVYRILLLMVGVGSLIKE). At 1329-1340 (KRSSAAKKKGAC) the chain is on the lumenal side. The chain crosses the membrane as a helical span at residues 1341-1361 (LICLALASTGVFNPMILAAGL). At 1362–1371 (MACDPNRKRG) the chain is on the cytoplasmic side. Residues 1372 to 1392 (WPATEVMTAVGLMFAIVGGLA) form a helical membrane-spanning segment. The Lumenal portion of the chain corresponds to 1393–1395 (ELD). Residues 1396 to 1416 (IDSMAIPMTIAGLMFAAFVIS) form a helical membrane-spanning segment. Residues 1417-1473 (GKSTDMWIERTADITWESDAEITGSSERVDVRLDDDGNFQLMNDPGAPWKIWMLRMA) lie on the Cytoplasmic side of the membrane. An interacts with and activates NS3 protease region spans residues 1424–1463 (IERTADITWESDAEITGSSERVDVRLDDDGNFQLMNDPGA). The segment at residues 1474-1494 (CLAISAYTPWAILPSVIGFWI) is an intramembrane region (helical). Topologically, residues 1495–2170 (TLQYTKRGGV…RMALEELPDA (676 aa)) are cytoplasmic. Residues 1502-1679 (GGVLWDTPSP…ERMEEPAPAG (178 aa)) form the Peptidase S7 domain. Residues His-1552, Asp-1576, and Ser-1636 each act as charge relay system; for serine protease NS3 activity in the active site. The region spanning 1682 to 1838 (PEMLRKKQIT…ESNAPISDMQ (157 aa)) is the Helicase ATP-binding domain. The segment at 1686 to 1689 (RKKQ) is important for RNA-binding. 1695-1702 (LHPGAGKT) contributes to the ATP binding site. A DEAH box motif is present at residues 1786-1789 (DEAH). In terms of domain architecture, Helicase C-terminal spans 1849–2014 (GYEWITEYVG…GLVAQLYQPE (166 aa)). Residue Lys-1890 is modified to N6-acetyllysine; by host. The regulates the ATPase activity of NS3 helicase stretch occupies residues 2165–2169 (EELPD). Residues 2171–2191 (LQTIVLIALLSVMSLGVFFLL) traverse the membrane as a helical segment. Topologically, residues 2192–2196 (MQRKG) are lumenal. An intramembrane region (helical) is located at residues 2197-2217 (IGKIGLGGVILGAATFFCWMA). Residue Glu-2218 is a topological domain, lumenal. Residues 2219–2239 (VPGTKIAGMLLLSLLLMIVLI) form a helical membrane-spanning segment. Residues 2240 to 2254 (PEPEKQRSQTDNQLA) lie on the Cytoplasmic side of the membrane. A helical membrane pass occupies residues 2255–2275 (VFLICVLTLVGAVAANEMGWL). Residues 2276-2309 (DKTKNDIGSLLGHRPEARETTLGVESFLLDLRPA) lie on the Lumenal side of the membrane. The helical intramembrane region spans 2310 to 2330 (TAWSLYAVTTAVLTPLLKHLI). The Lumenal portion of the chain corresponds to 2331–2377 (TSDYINTSLTSINVQASALFTLARGFPFVDVGVSALLLAVGCWGQVT). A helical transmembrane segment spans residues 2378–2398 (LTVTVTAAALLFCHYAYMVPG). The Cytoplasmic portion of the chain corresponds to 2399-2441 (WQAEAMRSAQRRTAAGIMKNVVVDGIVATDVPELERTTPVMQK). Residues 2442 to 2462 (KVGQIILILVSMAAVVVNPSV) form a helical membrane-spanning segment. Over 2463 to 2467 (RTVRE) the chain is Lumenal. The helical transmembrane segment at 2468–2488 (AGILTTAAAVTLWENGASSVW) threads the bilayer. The Cytoplasmic segment spans residues 2489 to 3430 (NATTAIGLCH…DTIVVEDTVL (942 aa)). In terms of domain architecture, mRNA cap 0-1 NS5-type MT spans 2526–2791 (GGAKGRTLGE…DVNLGSGTRA (266 aa)). Ser-2581 provides a ligand contact to S-adenosyl-L-methionine. Ser-2581 is modified (phosphoserine). Lys-2586 functions as the For 2'-O-MTase activity in the catalytic mechanism. Gly-2611, Trp-2612, Thr-2629, Lys-2630, Asp-2656, and Val-2657 together coordinate S-adenosyl-L-methionine. Catalysis depends on Asp-2671, which acts as the For 2'-O-MTase activity. Ile-2672 lines the S-adenosyl-L-methionine pocket. Catalysis depends on for 2'-O-MTase activity residues Lys-2707 and Glu-2743. S-adenosyl-L-methionine is bound at residue Tyr-2745. The Nuclear localization signal signature appears at 2914-2916 (RDK). Zn(2+) contacts are provided by Glu-2965, His-2969, Cys-2974, and Cys-2977. One can recognise a RdRp catalytic domain in the interval 3055–3207 (GKVYADDTAG…KPLDDRFATS (153 aa)). Zn(2+)-binding residues include His-3242, Cys-3258, and Cys-3377. The PDZ-binding signature appears at 3428–3430 (TVL).

The protein in the N-terminal section; belongs to the class I-like SAM-binding methyltransferase superfamily. mRNA cap 0-1 NS5-type methyltransferase family. As to quaternary structure, homodimer. Interacts (via N-terminus) with host EXOC1 (via C-terminus); this interaction results in EXOC1 degradation through the proteasome degradation pathway. Interacts with host DDX56; this interaction plays an important role in genomic RNA encapsidation. Forms heterodimers with envelope protein E in the endoplasmic reticulum and Golgi. In terms of assembly, homodimer; in the endoplasmic reticulum and Golgi. As to quaternary structure, homodimer; Homohexamer when secreted. Interacts with envelope protein E. NS1 interacts with NS4B. Interacts with host complement protein CFH; this interaction leads to the degradation of C3. Interacts (via N-terminus) with serine protease NS3. In terms of assembly, forms a heterodimer with serine protease NS3. May form homooligomers. As to quaternary structure, forms a heterodimer with NS2B. Interacts with NS4B. Interacts with unphosphorylated RNA-directed RNA polymerase NS5; this interaction stimulates RNA-directed RNA polymerase NS5 guanylyltransferase activity. Interacts with Serine protease/Helicase NS3. Interacts with NS1. In terms of assembly, homodimer. Interacts with host STAT2; this interaction inhibits the phosphorylation of the latter, and, when all viral proteins are present (polyprotein), targets STAT2 for degradation. Interacts with host PAF1 complex. In terms of processing, specific enzymatic cleavages in vivo yield mature proteins. Cleavages in the lumen of endoplasmic reticulum are performed by host signal peptidase, whereas cleavages in the cytoplasmic side are performed by serine protease NS3. Signal cleavage at the 2K-4B site requires a prior NS3 protease-mediated cleavage at the 4A-2K site. Cleaved in post-Golgi vesicles by a host furin, releasing the mature small envelope protein M, and peptide pr. This cleavage is incomplete as up to 30% of viral particles still carry uncleaved prM. Post-translationally, not N-glycosylated. In terms of processing, N-glycosylated. The excreted form is glycosylated and this is required for efficient secretion of the protein from infected cells. Acetylated by host KAT5. Acetylation modulates NS3 RNA-binding and unwinding activities and plays an important positive role for viral replication. Post-translationally, phosphorylated on serines residues. This phosphorylation may trigger NS5 nuclear localization.

It localises to the virion. The protein localises to the host nucleus. It is found in the host cytoplasm. Its subcellular location is the host perinuclear region. The protein resides in the secreted. It localises to the virion membrane. The protein localises to the host endoplasmic reticulum membrane. The catalysed reaction is Selective hydrolysis of -Xaa-Xaa-|-Yaa- bonds in which each of the Xaa can be either Arg or Lys and Yaa can be either Ser or Ala.. The enzyme catalyses RNA(n) + a ribonucleoside 5'-triphosphate = RNA(n+1) + diphosphate. It catalyses the reaction a ribonucleoside 5'-triphosphate + H2O = a ribonucleoside 5'-diphosphate + phosphate + H(+). It carries out the reaction ATP + H2O = ADP + phosphate + H(+). The catalysed reaction is a 5'-end (5'-triphosphoguanosine)-ribonucleoside in mRNA + S-adenosyl-L-methionine = a 5'-end (N(7)-methyl 5'-triphosphoguanosine)-ribonucleoside in mRNA + S-adenosyl-L-homocysteine. The enzyme catalyses a 5'-end (N(7)-methyl 5'-triphosphoguanosine)-ribonucleoside in mRNA + S-adenosyl-L-methionine = a 5'-end (N(7)-methyl 5'-triphosphoguanosine)-(2'-O-methyl-ribonucleoside) in mRNA + S-adenosyl-L-homocysteine + H(+). Its function is as follows. Plays a role in virus budding by binding to the cell membrane and gathering the viral RNA into a nucleocapsid that forms the core of a mature virus particle. During virus entry, may induce genome penetration into the host cytoplasm after hemifusion induced by the surface proteins. Can migrate to the cell nucleus where it modulates host functions. Overcomes the anti-viral effects of host EXOC1 by sequestering and degrading the latter through the proteasome degradation pathway. Functionally, inhibits RNA silencing by interfering with host Dicer. In terms of biological role, prevents premature fusion activity of envelope proteins in trans-Golgi by binding to envelope protein E at pH6.0. After virion release in extracellular space, gets dissociated from E dimers. Acts as a chaperone for envelope protein E during intracellular virion assembly by masking and inactivating envelope protein E fusion peptide. prM is the only viral peptide matured by host furin in the trans-Golgi network probably to avoid catastrophic activation of the viral fusion activity in acidic Golgi compartment prior to virion release. prM-E cleavage is inefficient, and many virions are only partially matured. These uncleaved prM would play a role in immune evasion. Its function is as follows. May play a role in virus budding. Exerts cytotoxic effects by activating a mitochondrial apoptotic pathway through M ectodomain. May display a viroporin activity. Functionally, binds to host cell surface receptor and mediates fusion between viral and cellular membranes. Envelope protein is synthesized in the endoplasmic reticulum in the form of heterodimer with protein prM. They play a role in virion budding in the ER, and the newly formed immature particle is covered with 60 spikes composed of heterodimer between precursor prM and envelope protein E. The virion is transported to the Golgi apparatus where the low pH causes dissociation of PrM-E heterodimers and formation of E homodimers. prM-E cleavage is inefficient, and many virions are only partially matured. These uncleaved prM would play a role in immune evasion. In terms of biological role, involved in immune evasion, pathogenesis and viral replication. Once cleaved off the polyprotein, is targeted to three destinations: the viral replication cycle, the plasma membrane and the extracellular compartment. Essential for viral replication. Required for formation of the replication complex and recruitment of other non-structural proteins to the ER-derived membrane structures. Excreted as a hexameric lipoparticle that plays a role against host immune response. Antagonizing the complement function. Binds to the host macrophages and dendritic cells. Inhibits signal transduction originating from Toll-like receptor 3 (TLR3). Component of the viral RNA replication complex that functions in virion assembly and antagonizes the host alpha/beta interferon antiviral response. Its function is as follows. Required cofactor for the serine protease function of NS3. May have membrane-destabilizing activity and form viroporins. Functionally, displays three enzymatic activities: serine protease, NTPase and RNA helicase. NS3 serine protease, in association with NS2B, performs its autocleavage and cleaves the polyprotein at dibasic sites in the cytoplasm: C-prM, NS2A-NS2B, NS2B-NS3, NS3-NS4A, NS4A-2K and NS4B-NS5. NS3 RNA helicase binds RNA and unwinds dsRNA in the 3' to 5' direction. NS3 supports the separation of RNA daughter and template strands during viral replication. The helicase part is involved in the inhibition of phosphorylation of host STAT1, and thereby inhibition of host type-I IFN signaling. In addition, NS3 assists the initiation of replication by unwinding the RNA secondary structure in the 3' non-translated region (NTR). Inhibits STAT2 translocation in the nucleus after IFN-alpha treatment. In terms of biological role, regulates the ATPase activity of the NS3 helicase activity. NS4A allows NS3 helicase to conserve energy during unwinding. Functions as a signal peptide for NS4B and is required for the interferon antagonism activity of the latter. Its function is as follows. Induces the formation of ER-derived membrane vesicles where the viral replication takes place. Inhibits interferon (IFN)-induced host STAT1 phosphorylation and nuclear translocation, thereby preventing the establishment of cellular antiviral state by blocking the IFN-alpha/beta pathway. Inhibits STAT2 translocation in the nucleus after IFN-alpha treatment. Functionally, replicates the viral (+) and (-) RNA genome, and performs the capping of genomes in the cytoplasm. NS5 methylates viral RNA cap at guanine N-7 and ribose 2'-O positions. Besides its role in RNA genome replication, also prevents the establishment of cellular antiviral state by blocking the interferon-alpha/beta (IFN-alpha/beta) signaling pathway. Inhibits host TYK2 and STAT2 phosphorylation, thereby preventing activation of JAK-STAT signaling pathway. This is Genome polyprotein from Aedes (Tropical bont tick).